Reading from the N-terminus, the 467-residue chain is Mothers against decapentaplegic homolog 2 (467 aa).

Ser2 is modified (N-acetylserine). Thr8 bears the Phosphothreonine; by MAPK3 mark. The MH1 domain maps to 10–176; the sequence is PVVKRLLGWK…YQRVETPVLP (167 aa). Lys19 is modified (N6-acetyllysine). The Zn(2+) site is built by Cys74, Cys149, Cys161, and His166. Residues 207–217 are compositionally biased toward polar residues; it reads PAGIEPQSNYI. The interval 207 to 251 is disordered; the sequence is PAGIEPQSNYIPETPPPGYISEDGETSDQQLNQSMDTGSPAELSP. Phosphothreonine is present on Thr220. The PY-motif signature appears at 221 to 225; the sequence is PPPGY. Polar residues predominate over residues 233–243; it reads SDQQLNQSMDT. Ser240 bears the Phosphoserine; by CAMK2 mark. Phosphoserine occurs at positions 245, 250, 255, 458, 460, and 464. Positions 274–467 constitute an MH2 domain; the sequence is WCSIAYYELN…SPSVRCSSMS (194 aa). A phosphoserine; by TGFBR1 mark is found at Ser465 and Ser467.

This sequence belongs to the dwarfin/SMAD family. Monomer; in the absence of TGF-beta. Heterodimer; in the presence of TGF-beta. Forms a heterodimer with co-SMAD, SMAD4, in the nucleus to form the transactivation complex SMAD2/SMAD4. Found in a complex with SMAD3 and TRIM33 upon addition of TGF-beta. Identified in a complex that contains at least ZNF451, SMAD2, SMAD3 and SMAD4. Interacts (via the MH2 domain) with ZFYVE9; may form trimers with the SMAD4 co-SMAD. Interacts with TAZ/WWRT1. Interacts with FOXH1. Interacts with SNW1. Interacts with CREB-binding protein (CBP) and EP300. Interacts with SNON. Interacts with ALK4/ACVR1B. Interacts with SKOR1. Interacts with SKOR2. Interacts with PRDM16. Interacts (via MH2 domain) with LEMD3. Interacts with RBPMS. Interacts with WWP1. Interacts (dephosphorylated form, via the MH1 and MH2 domains) with RANBP3 (via its C-terminal R domain); the interaction results in the export of dephosphorylated SMAD3 out of the nucleus and termination of the TGF-beta signaling. Interacts with PDPK1 (via PH domain). Interacts with DAB2; the interactions are enhanced upon TGF-beta stimulation. Interacts with USP15. Interacts with PPP5C. Interacts with LDLRAD4 (via the SMAD interaction motif). Interacts (via MH2 domain) with PMEPA1 (via the SMAD interaction motif). Interacts with ZFHX3. Interacts with ZNF451. Interacts with SMURF2 when phosphorylated on Ser-465/467. Interacts with PPM1A. Interacts with TGF-beta. Interacts with TGFBR1. Interacts with TGIF. Interacts with SMAD3 and TRIM33. Interacts with ZNF580. Interacts with NEDD4L in response to TGF-beta. Interacts with HGS. Interacts with AIP1. Interacts with WWP1. Interacts with PML. Interacts weakly with ZNF8. Interacts (when phosphorylated) with RNF111; RNF111 acts as an enhancer of the transcriptional responses by mediating ubiquitination and degradation of SMAD2 inhibitors. Interacts with YAP1 (when phosphorylated at 'Ser-127'). Interacts when phosphorylated with IPO7; the interaction facilitates translocation of SMAD2 to the nucleus. Interacts with MTMR4; negatively regulates TGF-beta signaling through SMAD2 dephosphorylation and retention in endosomes. Phosphorylated on one or several of Thr-220, Ser-245, Ser-250, and Ser-255. In response to TGF-beta, phosphorylated on Ser-465/467 by TGF-beta and activin type 1 receptor kinases. TGF-beta-induced Ser-465/467 phosphorylation declines progressively in a KMT5A-dependent manner. Able to interact with SMURF2 when phosphorylated on Ser-465/467, recruiting other proteins, such as SNON, for degradation. In response to decorin, the naturally occurring inhibitor of TGF-beta signaling, phosphorylated on Ser-240 by CaMK2. Phosphorylated by MAPK3 upon EGF stimulation; which increases transcriptional activity and stability, and is blocked by calmodulin. Phosphorylated by PDPK1. In terms of processing, in response to TGF-beta, ubiquitinated by NEDD4L; which promotes its degradation. Monoubiquitinated, leading to prevent DNA-binding. Deubiquitination by USP15 alleviates inhibition and promotes activation of TGF-beta target genes. Ubiquitinated by RNF111, leading to its degradation: only SMAD2 proteins that are 'in use' are targeted by RNF111, RNF111 playing a key role in activating SMAD2 and regulating its turnover. Post-translationally, acetylated on Lys-19 by coactivators in response to TGF-beta signaling, which increases transcriptional activity. Isoform short: Acetylation increases DNA binding activity in vitro and enhances its association with target promoters in vivo. Acetylation in the nucleus by EP300 is enhanced by TGF-beta. As to expression, expressed at high levels in skeletal muscle, endothelial cells, heart and placenta.

Its subcellular location is the cytoplasm. It is found in the nucleus. Its function is as follows. Receptor-regulated SMAD (R-SMAD) that is an intracellular signal transducer and transcriptional modulator activated by TGF-beta (transforming growth factor) and activin type 1 receptor kinases. Binds the TRE element in the promoter region of many genes that are regulated by TGF-beta and, on formation of the SMAD2/SMAD4 complex, activates transcription. Promotes TGFB1-mediated transcription of odontoblastic differentiation genes in dental papilla cells. Positively regulates PDPK1 kinase activity by stimulating its dissociation from the 14-3-3 protein YWHAQ which acts as a negative regulator. May act as a tumor suppressor in colorectal carcinoma. The protein is Mothers against decapentaplegic homolog 2 (SMAD2) of Homo sapiens (Human).